A 501-amino-acid polypeptide reads, in one-letter code: L-arabinose isomerase (501 aa).

Mn(2+)-binding residues include glutamate 306, glutamate 333, histidine 350, and histidine 449.

This sequence belongs to the arabinose isomerase family. Requires Mn(2+) as cofactor.

It catalyses the reaction beta-L-arabinopyranose = L-ribulose. It participates in carbohydrate degradation; L-arabinose degradation via L-ribulose; D-xylulose 5-phosphate from L-arabinose (bacterial route): step 1/3. Catalyzes the conversion of L-arabinose to L-ribulose. The polypeptide is L-arabinose isomerase (Mycolicibacterium smegmatis (strain ATCC 700084 / mc(2)155) (Mycobacterium smegmatis)).